The following is a 401-amino-acid chain: Acetate kinase (401 aa).

Residue Asn-7 coordinates Mg(2+). Lys-14 is an ATP binding site. Arg-92 serves as a coordination point for substrate. Asp-149 (proton donor/acceptor) is an active-site residue. Residues 209–213 (HLGNG), 283–285 (DAR), and 331–335 (GLGEN) each bind ATP. A Mg(2+)-binding site is contributed by Glu-385.

This sequence belongs to the acetokinase family. In terms of assembly, homodimer. Requires Mg(2+) as cofactor. It depends on Mn(2+) as a cofactor.

It is found in the cytoplasm. It carries out the reaction acetate + ATP = acetyl phosphate + ADP. The protein operates within metabolic intermediate biosynthesis; acetyl-CoA biosynthesis; acetyl-CoA from acetate: step 1/2. Functionally, catalyzes the formation of acetyl phosphate from acetate and ATP. Can also catalyze the reverse reaction. This Helicobacter pylori (strain Shi470) protein is Acetate kinase.